Reading from the N-terminus, the 35-residue chain is Cycloamanide F proprotein (35 aa).

Positions 1 to 10 (MSDINATRLP) are excised as a propeptide. The segment at residues 11–18 (IVGILGLP) is a cross-link (cyclopeptide (Ile-Pro)). A propeptide spanning residues 19 to 35 (CIGDDVNSTLTHGEDLC) is cleaved from the precursor.

Belongs to the MSDIN fungal toxin family. Processed by the macrocyclase-peptidase enzyme POPB to yield a cyclic decapeptide. POPB first removes 10 residues from the N-terminus. Conformational trapping of the remaining peptide forces the enzyme to release this intermediate rather than proceed to macrocyclization. The enzyme rebinds the remaining peptide in a different conformation and catalyzes macrocyclization of the N-terminal 8 residues.

In terms of biological role, cyclic octapeptide that belongs to the MSDIN-like toxin family responsible for a large number of food poisoning cases and deaths. Cycloaminide E is structurally related to other cycloamanides that are non-toxic to mammals but show immunosuppressive activity. The sequence is that of Cycloamanide F proprotein from Amanita phalloides (Death cap).